The chain runs to 328 residues: Protein MGF 300-4L (328 aa).

This sequence belongs to the asfivirus MGF 300 family.

This is Protein MGF 300-4L from Ornithodoros (relapsing fever ticks).